Consider the following 224-residue polypeptide: Peroxiredoxin-6 (224 aa).

One can recognise a Thioredoxin domain in the interval 5 to 169 (LLLGDEAPNF…ILRVVDSLQL (165 aa)). The interval 31–40 (DSWGILFSHP) is required and sufficient for targeting to lysosomes and lamellar bodies. A Phosphothreonine modification is found at T44. The Cysteine sulfenic acid (-SOH) intermediate; for peroxidase activity role is filled by C47. At K63 the chain carries N6-acetyllysine. Y89 is modified (phosphotyrosine). T93 carries the phosphothreonine modification. The For phospholipase activity role is filled by D140. A Phosphothreonine; by MAPK modification is found at T177. K209 carries the post-translational modification N6-acetyllysine; alternate. K209 is subject to N6-succinyllysine; alternate.

It belongs to the peroxiredoxin family. Prx6 subfamily. As to quaternary structure, homodimer. Interacts with GSTP1; mediates PRDX6 glutathionylation and regeneration. Interacts with APEX1. Interacts with STH. May interact with FAM168B. May interact with HTR2A. Irreversibly inactivated by overoxidation of Cys-47 to sulfinic acid (Cys-SO(2)H) and sulfonic acid (Cys-SO(3)H) forms upon oxidative stress. In terms of processing, phosphorylation at Thr-177 by MAP kinases increases the phospholipase activity of the enzyme. The phosphorylated form exhibits a greater lysophosphatidylcholine acyltransferase activity compared to the non-phosphorylated form. Highly expressed in heart, kidney and liver. Moderate expression in brain and stomach. Very low levels in intestine.

Its subcellular location is the cytoplasm. The protein resides in the lysosome. It carries out the reaction a hydroperoxide + 2 glutathione = an alcohol + glutathione disulfide + H2O. The catalysed reaction is a 1,2-diacyl-sn-glycero-3-phosphocholine + H2O = a 1-acyl-sn-glycero-3-phosphocholine + a fatty acid + H(+). It catalyses the reaction a 1-acyl-sn-glycero-3-phosphocholine + an acyl-CoA = a 1,2-diacyl-sn-glycero-3-phosphocholine + CoA. The enzyme catalyses 1-hexadecanoyl-sn-glycero-3-phosphocholine + hexadecanoyl-CoA = 1,2-dihexadecanoyl-sn-glycero-3-phosphocholine + CoA. It carries out the reaction 1,2-dihexadecanoyl-sn-glycero-3-phosphocholine + H2O = 1-hexadecanoyl-sn-glycero-3-phosphocholine + hexadecanoate + H(+). Its activity is regulated as follows. MJ33 or lithium;[(2R)-1-hexadecoxy-3-(2,2,2-trifluoroethoxy)propan-2-yl] methyl phosphate inhibits its phospholipase A2 activity. CI-976 or 2,2-Dimethyl-N-(2,4,6-trimethoxyphenyl)dodecanamide inhibits its lysophosphatidylcholine acyltransferase activity. In terms of biological role, thiol-specific peroxidase that catalyzes the reduction of hydrogen peroxide and organic hydroperoxides to water and alcohols, respectively. Can reduce H(2)O(2) and short chain organic, fatty acid, and phospholipid hydroperoxides. Has phospholipase activity. Can either reduce the oxidized sn-2 fatty acyl group of phospholipids (peroxidase activity) or hydrolyze the sn-2 ester bond of phospholipids (phospholipase activity). These activities are dependent on binding to phospholipids at acidic pH and to oxidized phospholipds at cytosolic pH. Plays a role in cell protection against oxidative stress by detoxifying peroxides and in phospholipid homeostasis. Exhibits acyl-CoA-dependent lysophospholipid acyltransferase which mediates the conversion of lysophosphatidylcholine (1-acyl-sn-glycero-3-phosphocholine or LPC) into phosphatidylcholine (1,2-diacyl-sn-glycero-3-phosphocholine or PC). Shows a clear preference for LPC as the lysophospholipid and for palmitoyl CoA as the fatty acyl substrate. The chain is Peroxiredoxin-6 (Prdx6) from Mus musculus (Mouse).